Reading from the N-terminus, the 288-residue chain is Thymidylate synthase (288 aa).

A dUMP-binding site is contributed by R21. N51 contributes to the (6R)-5,10-methylene-5,6,7,8-tetrahydrofolate binding site. DUMP is bound at residue 150–151; that stretch reads RR. Catalysis depends on C170, which acts as the Nucleophile. Residues 190–193, N201, and 231–233 contribute to the dUMP site; these read RSGD and HIY. (6R)-5,10-methylene-5,6,7,8-tetrahydrofolate is bound at residue D193. A287 is a (6R)-5,10-methylene-5,6,7,8-tetrahydrofolate binding site.

This sequence belongs to the thymidylate synthase family. Bacterial-type ThyA subfamily. Homodimer.

It is found in the cytoplasm. The enzyme catalyses dUMP + (6R)-5,10-methylene-5,6,7,8-tetrahydrofolate = 7,8-dihydrofolate + dTMP. The protein operates within pyrimidine metabolism; dTTP biosynthesis. Catalyzes the reductive methylation of 2'-deoxyuridine-5'-monophosphate (dUMP) to 2'-deoxythymidine-5'-monophosphate (dTMP) while utilizing 5,10-methylenetetrahydrofolate (mTHF) as the methyl donor and reductant in the reaction, yielding dihydrofolate (DHF) as a by-product. This enzymatic reaction provides an intracellular de novo source of dTMP, an essential precursor for DNA biosynthesis. The protein is Thymidylate synthase of Aster yellows witches'-broom phytoplasma (strain AYWB).